The primary structure comprises 448 residues: Dual specificity mitogen-activated protein kinase kinase 5 (448 aa).

The segment at 18–25 (VIRIKIPN) is interaction with MAPK7. The PB1 domain occupies 18 to 109 (VIRIKIPNSG…EPLQIFPRAC (92 aa)). Positions 64-68 (DEDGD) are interaction with MAP3K2/MAP3K3. The segment at 116-144 (NIHGLKVNTRAGPSQHTSPVVSDSLPSNS) is disordered. Positions 117-131 (IHGLKVNTRAGPSQH) are interaction with MAPK7. The span at 126–144 (AGPSQHTSPVVSDSLPSNS) shows a compositional bias: polar residues. The region spanning 166-419 (IRYRDTLGHG…PEELMGHPFI (254 aa)) is the Protein kinase domain. ATP-binding positions include 172-180 (LGHGNGGTV) and Lys-195. Asp-283 (proton acceptor) is an active-site residue. A Phosphoserine modification is found at Ser-311. Thr-315 carries the phosphothreonine modification.

This sequence belongs to the protein kinase superfamily. STE Ser/Thr protein kinase family. MAP kinase kinase subfamily. Interacts with PARD6A, MAP3K3 and MAPK7. Forms a complex with SQSTM1 and PRKCZ or PRKCI. Requires Mg(2+) as cofactor. Post-translationally, activated by phosphorylation on Ser/Thr by MAP kinase kinase kinases. As to expression, expressed in the liver and brain (at protein level). In terms of tissue distribution, expressed in the liver, muscle, testes, lung, kidney, spleen, heart and brain (at protein level).

Its subcellular location is the cytoplasm. The protein localises to the cytosol. It is found in the membrane. It carries out the reaction L-seryl-[protein] + ATP = O-phospho-L-seryl-[protein] + ADP + H(+). The enzyme catalyses L-threonyl-[protein] + ATP = O-phospho-L-threonyl-[protein] + ADP + H(+). The catalysed reaction is L-tyrosyl-[protein] + ATP = O-phospho-L-tyrosyl-[protein] + ADP + H(+). Its function is as follows. Acts as a scaffold for the formation of a ternary MAP3K2/MAP3K3-MAP3K5-MAPK7 signaling complex. Activation of this pathway appears to play a critical role in protecting cells from stress-induced apoptosis, neuronal survival and cardiac development and angiogenesis. As part of the MAPK/ERK signaling pathway, acts as a negative regulator of apoptosis in cardiomyocytes via promotion of STUB1/CHIP-mediated ubiquitination and degradation of ICER-type isoforms of CREM. This Rattus norvegicus (Rat) protein is Dual specificity mitogen-activated protein kinase kinase 5 (Map2k5).